The following is a 104-amino-acid chain: Large ribosomal subunit protein bL21 (104 aa).

It belongs to the bacterial ribosomal protein bL21 family. As to quaternary structure, part of the 50S ribosomal subunit. Contacts protein L20.

In terms of biological role, this protein binds to 23S rRNA in the presence of protein L20. The chain is Large ribosomal subunit protein bL21 from Gluconobacter oxydans (strain 621H) (Gluconobacter suboxydans).